A 330-amino-acid chain; its full sequence is Lipoyl synthase (330 aa).

7 residues coordinate [4Fe-4S] cluster: Cys-77, Cys-82, Cys-88, Cys-103, Cys-107, Cys-110, and Ser-317. Residues 89–306 enclose the Radical SAM core domain; the sequence is FNHGTATFMI…RSEAERMGFE (218 aa).

It belongs to the radical SAM superfamily. Lipoyl synthase family. [4Fe-4S] cluster serves as cofactor.

Its subcellular location is the cytoplasm. The enzyme catalyses [[Fe-S] cluster scaffold protein carrying a second [4Fe-4S](2+) cluster] + N(6)-octanoyl-L-lysyl-[protein] + 2 oxidized [2Fe-2S]-[ferredoxin] + 2 S-adenosyl-L-methionine + 4 H(+) = [[Fe-S] cluster scaffold protein] + N(6)-[(R)-dihydrolipoyl]-L-lysyl-[protein] + 4 Fe(3+) + 2 hydrogen sulfide + 2 5'-deoxyadenosine + 2 L-methionine + 2 reduced [2Fe-2S]-[ferredoxin]. It participates in protein modification; protein lipoylation via endogenous pathway; protein N(6)-(lipoyl)lysine from octanoyl-[acyl-carrier-protein]: step 2/2. Its function is as follows. Catalyzes the radical-mediated insertion of two sulfur atoms into the C-6 and C-8 positions of the octanoyl moiety bound to the lipoyl domains of lipoate-dependent enzymes, thereby converting the octanoylated domains into lipoylated derivatives. This chain is Lipoyl synthase, found in Actinobacillus pleuropneumoniae serotype 5b (strain L20).